We begin with the raw amino-acid sequence, 237 residues long: Aliphatic sulfonates import ATP-binding protein SsuB 1 (237 aa).

The ABC transporter domain maps to 5-221 (LMNIRVDRKA…PRDRRDPLLA (217 aa)). ATP is bound at residue 38–45 (GPSGCGKS).

This sequence belongs to the ABC transporter superfamily. Aliphatic sulfonates importer (TC 3.A.1.17.2) family. The complex is composed of two ATP-binding proteins (SsuB), two transmembrane proteins (SsuC) and a solute-binding protein (SsuA).

The protein resides in the cell inner membrane. The enzyme catalyses ATP + H2O + aliphatic sulfonate-[sulfonate-binding protein]Side 1 = ADP + phosphate + aliphatic sulfonateSide 2 + [sulfonate-binding protein]Side 1.. Functionally, part of the ABC transporter complex SsuABC involved in aliphatic sulfonates import. Responsible for energy coupling to the transport system. This Pseudomonas savastanoi pv. phaseolicola (strain 1448A / Race 6) (Pseudomonas syringae pv. phaseolicola (strain 1448A / Race 6)) protein is Aliphatic sulfonates import ATP-binding protein SsuB 1.